A 167-amino-acid polypeptide reads, in one-letter code: Crossover junction endodeoxyribonuclease RuvC (167 aa).

Active-site residues include D7, E67, and D140. Mg(2+) contacts are provided by D7, E67, and D140.

This sequence belongs to the RuvC family. Homodimer which binds Holliday junction (HJ) DNA. The HJ becomes 2-fold symmetrical on binding to RuvC with unstacked arms; it has a different conformation from HJ DNA in complex with RuvA. In the full resolvosome a probable DNA-RuvA(4)-RuvB(12)-RuvC(2) complex forms which resolves the HJ. Requires Mg(2+) as cofactor.

The protein resides in the cytoplasm. It catalyses the reaction Endonucleolytic cleavage at a junction such as a reciprocal single-stranded crossover between two homologous DNA duplexes (Holliday junction).. The RuvA-RuvB-RuvC complex processes Holliday junction (HJ) DNA during genetic recombination and DNA repair. Endonuclease that resolves HJ intermediates. Cleaves cruciform DNA by making single-stranded nicks across the HJ at symmetrical positions within the homologous arms, yielding a 5'-phosphate and a 3'-hydroxyl group; requires a central core of homology in the junction. The consensus cleavage sequence is 5'-(A/T)TT(C/G)-3'. Cleavage occurs on the 3'-side of the TT dinucleotide at the point of strand exchange. HJ branch migration catalyzed by RuvA-RuvB allows RuvC to scan DNA until it finds its consensus sequence, where it cleaves and resolves the cruciform DNA. This is Crossover junction endodeoxyribonuclease RuvC from Dehalococcoides mccartyi (strain ATCC BAA-2100 / JCM 16839 / KCTC 5957 / BAV1).